Reading from the N-terminus, the 215-residue chain is Transmembrane protein 267 (215 aa).

Transmembrane regions (helical) follow at residues 77 to 97 (FGEV…HFFQ), 114 to 134 (FLHC…AVHL), and 178 to 198 (SSFY…LMYL).

It is found in the membrane. In Mus musculus (Mouse), this protein is Transmembrane protein 267.